Consider the following 500-residue polypeptide: Histidine--tRNA ligase (500 aa).

Belongs to the class-II aminoacyl-tRNA synthetase family. Homodimer.

Its subcellular location is the cytoplasm. It catalyses the reaction tRNA(His) + L-histidine + ATP = L-histidyl-tRNA(His) + AMP + diphosphate + H(+). The protein is Histidine--tRNA ligase (hisS) of Mesorhizobium japonicum (strain LMG 29417 / CECT 9101 / MAFF 303099) (Mesorhizobium loti (strain MAFF 303099)).